We begin with the raw amino-acid sequence, 317 residues long: Thymidylate synthase (317 aa).

Residues R24 and 179–180 (RR) each bind dUMP. C199 functions as the Nucleophile in the catalytic mechanism. Residues 219-222 (RSAD), N230, and 260-262 (HIY) contribute to the dUMP site. D222 contacts (6R)-5,10-methylene-5,6,7,8-tetrahydrofolate. Position 316 (A316) interacts with (6R)-5,10-methylene-5,6,7,8-tetrahydrofolate.

Belongs to the thymidylate synthase family. Bacterial-type ThyA subfamily. As to quaternary structure, homodimer.

The protein resides in the cytoplasm. The enzyme catalyses dUMP + (6R)-5,10-methylene-5,6,7,8-tetrahydrofolate = 7,8-dihydrofolate + dTMP. The protein operates within pyrimidine metabolism; dTTP biosynthesis. In terms of biological role, catalyzes the reductive methylation of 2'-deoxyuridine-5'-monophosphate (dUMP) to 2'-deoxythymidine-5'-monophosphate (dTMP) while utilizing 5,10-methylenetetrahydrofolate (mTHF) as the methyl donor and reductant in the reaction, yielding dihydrofolate (DHF) as a by-product. This enzymatic reaction provides an intracellular de novo source of dTMP, an essential precursor for DNA biosynthesis. The protein is Thymidylate synthase of Oceanobacillus iheyensis (strain DSM 14371 / CIP 107618 / JCM 11309 / KCTC 3954 / HTE831).